The sequence spans 153 residues: Arachidonate 5-lipoxygenase-activating protein (153 aa).

Over Met-1–Asn-8 the chain is Lumenal. The helical transmembrane segment at Ile-9–Val-30 threads the bilayer. The Cytoplasmic segment spans residues Glu-31–Arg-52. A helical membrane pass occupies residues Val-53 to Phe-77. Over Cys-78 to Gln-80 the chain is Lumenal. The helical transmembrane segment at Val-81 to Leu-102 threads the bilayer. The Cytoplasmic portion of the chain corresponds to Gly-103 to Gln-107. An intramembrane segment occupies Ser-108 to Gly-115. The chain crosses the membrane as a helical span at residues Lys-116–Ala-128. Over Gly-129–Thr-153 the chain is Lumenal.

It belongs to the MAPEG family. Homotrimer. Interacts with LTC4S and ALOX5.

Its subcellular location is the nucleus membrane. It is found in the endoplasmic reticulum membrane. Its function is as follows. Required for leukotriene biosynthesis by ALOX5 (5-lipoxygenase). Anchors ALOX5 to the membrane. Binds arachidonic acid, and could play an essential role in the transfer of arachidonic acid to ALOX5. Binds to MK-886, a compound that blocks the biosynthesis of leukotrienes. In Sus scrofa (Pig), this protein is Arachidonate 5-lipoxygenase-activating protein (ALOX5AP).